Consider the following 364-residue polypeptide: Geranylfarnesyl diphosphate synthase, chloroplastic (364 aa).

The transit peptide at 1-51 (MSHCTIFLYKYFPGKPRYQHCSFLHPLNHKLKSLFLPITGSRFLSNSTFSV) directs the protein to the chloroplast. 3 residues coordinate isopentenyl diphosphate: lysine 72, lysine 111, and histidine 143. Mg(2+)-binding residues include aspartate 150 and aspartate 156. Arginine 161 serves as a coordination point for dimethylallyl diphosphate. Isopentenyl diphosphate is bound at residue arginine 162. Dimethylallyl diphosphate-binding residues include lysine 249, threonine 250, glutamine 287, aspartate 294, lysine 304, and lysine 314.

It belongs to the FPP/GGPP synthase family. In terms of assembly, monomer. Mg(2+) serves as cofactor. In terms of tissue distribution, strongly expressed in glandular trichomes, and, at low levels, in leaves, stems and flowers.

It is found in the plastid. It localises to the chloroplast. The catalysed reaction is isopentenyl diphosphate + (2E,6E,10E)-geranylgeranyl diphosphate = (2E,6E,10E,14E)-geranylfarnesyl diphosphate + diphosphate. It catalyses the reaction 2 isopentenyl diphosphate + (2E,6E)-farnesyl diphosphate = (2E,6E,10E,14E)-geranylfarnesyl diphosphate + 2 diphosphate. It carries out the reaction 3 isopentenyl diphosphate + (2E)-geranyl diphosphate = (2E,6E,10E,14E)-geranylfarnesyl diphosphate + 3 diphosphate. The enzyme catalyses 4 isopentenyl diphosphate + dimethylallyl diphosphate = (2E,6E,10E,14E)-geranylfarnesyl diphosphate + 4 diphosphate. It participates in secondary metabolite biosynthesis; terpenoid biosynthesis. It functions in the pathway isoprenoid biosynthesis. Involved in the biosynthesis of leucosceptrane sesterterpenoids natural products, which are playing defensive roles toward herbivorus insects (e.g. Spodoptera exigua). Catalyzes the condensation of isopentenyl pyrophosphate (IDP) with the allylic pyrophosphates to yield geranylfarnesyl diphosphate (GFDP), the C(25) prenyl diphosphate precursor to all sesterterpenoids. Geranylgeranyl diphosphate (GGPP) is the preferred substrate, however dimethylallyl diphosphate (DMADP), farnesyl diphosphate (FDP) and geranyl diphosphate (GDP) can also be used as allylic substrate. This Leucosceptrum canum (Hairy white-wand) protein is Geranylfarnesyl diphosphate synthase, chloroplastic.